A 92-amino-acid polypeptide reads, in one-letter code: Small ribosomal subunit protein bS20 (92 aa).

Residues 1–25 are disordered; sequence MANSAQARKRARQAAKANSHNSALR.

It belongs to the bacterial ribosomal protein bS20 family.

Functionally, binds directly to 16S ribosomal RNA. The polypeptide is Small ribosomal subunit protein bS20 (Paraburkholderia phytofirmans (strain DSM 17436 / LMG 22146 / PsJN) (Burkholderia phytofirmans)).